We begin with the raw amino-acid sequence, 472 residues long: DNA-cytosine methyltransferase (472 aa).

The SAM-dependent MTase C5-type domain occupies 87 to 457 (FRFIDLFAGI…KLLEPKIKQA (371 aa)). Cys177 is a catalytic residue.

This sequence belongs to the class I-like SAM-binding methyltransferase superfamily. C5-methyltransferase family.

It carries out the reaction a 2'-deoxycytidine in DNA + S-adenosyl-L-methionine = a 5-methyl-2'-deoxycytidine in DNA + S-adenosyl-L-homocysteine + H(+). In terms of biological role, this methylase recognizes the double-stranded sequence 5'-CCWGG-3', methylates C-2 on both strands. In Escherichia coli O157:H7, this protein is DNA-cytosine methyltransferase (dcm).